The chain runs to 100 residues: Urease subunit gamma (100 aa).

Belongs to the urease gamma subunit family. As to quaternary structure, heterotrimer of UreA (gamma), UreB (beta) and UreC (alpha) subunits. Three heterotrimers associate to form the active enzyme.

Its subcellular location is the cytoplasm. It catalyses the reaction urea + 2 H2O + H(+) = hydrogencarbonate + 2 NH4(+). The protein operates within nitrogen metabolism; urea degradation; CO(2) and NH(3) from urea (urease route): step 1/1. The protein is Urease subunit gamma of Magnetococcus marinus (strain ATCC BAA-1437 / JCM 17883 / MC-1).